We begin with the raw amino-acid sequence, 436 residues long: MNILDGIKSLALKLGSKQDQTYYARGLSLTDDLMQIEALWRDNWIANKVCIKRSEDMVRNWRDIFSNDLKSEQLDEFTKLERRLKLRETLTKALQWSSLYGAVGLLVVTDTINITSPLQPTERLKRLIILPKWKISPTGQRDDDVFSPNFGRYSEYTITGGTQSVSVHHSRLLIINANDAPLSDNDIWGVSDLEKIIDVLKRFDSASANVGDLIFESKIDIFKIAGLSDKISAGLENDVAHVISAVQSIKSATNSLLLDAENEYDRKELSFGGLKDLLTEFRNAVAGAADMPVTILFGQSVSGLASGDEDIQNYHESIHRLQETRLRPVLEVLDTLLCNELFGGQPDDWWFEFLPLTVVKQEQQVNMLNTFATAANTLIQNGVVNEYQVANELRESGLFANISADDIEEMKNANELARNFEEPEGESTQVQASEDE.

This is an uncharacterized protein from Haemophilus influenzae (strain ATCC 51907 / DSM 11121 / KW20 / Rd).